Here is a 396-residue protein sequence, read N- to C-terminus: Actin-related protein 6 (396 aa).

Position 2 is an N-acetylthreonine (T2). K260 is modified (N6-acetyllysine).

It belongs to the actin family. ARP6 subfamily. As to quaternary structure, component of the chromatin-remodeling SRCAP complex composed of at least SRCAP, DMAP1, RUVBL1, RUVBL2, ACTL6A, YEATS4, ACTR6 and ZNHIT1. Interacts with CBX1, CBX3 and CBX5.

It is found in the cytoplasm. The protein resides in the cytoskeleton. It localises to the nucleus. Its subcellular location is the nucleolus. Required for formation and/or maintenance of proper nucleolar structure and function. Plays a dual role in the regulation of ribosomal DNA (rDNA) transcription. In the presence of high glucose, maintains active rDNA transcription through H2A.Z deposition and under glucose starvation, is required for the repression of rDNA transcription, and this function may be independent of H2A.Z. The polypeptide is Actin-related protein 6 (ACTR6) (Homo sapiens (Human)).